Reading from the N-terminus, the 429-residue chain is Adenosylmethionine-8-amino-7-oxononanoate aminotransferase (429 aa).

A substrate-binding site is contributed by Trp-52. 112-113 is a binding site for pyridoxal 5'-phosphate; the sequence is GS. Tyr-144 is a binding site for substrate. A pyridoxal 5'-phosphate-binding site is contributed by Asp-245. Lys-274 and Gly-307 together coordinate substrate. The residue at position 274 (Lys-274) is an N6-(pyridoxal phosphate)lysine. 308-309 is a pyridoxal 5'-phosphate binding site; it reads PT. Arg-391 contributes to the substrate binding site.

Belongs to the class-III pyridoxal-phosphate-dependent aminotransferase family. BioA subfamily. In terms of assembly, homodimer. It depends on pyridoxal 5'-phosphate as a cofactor.

The protein localises to the cytoplasm. The catalysed reaction is (8S)-8-amino-7-oxononanoate + S-adenosyl-L-methionine = S-adenosyl-4-methylsulfanyl-2-oxobutanoate + (7R,8S)-7,8-diammoniononanoate. Its pathway is cofactor biosynthesis; biotin biosynthesis; 7,8-diaminononanoate from 8-amino-7-oxononanoate (SAM route): step 1/1. Functionally, catalyzes the transfer of the alpha-amino group from S-adenosyl-L-methionine (SAM) to 7-keto-8-aminopelargonic acid (KAPA) to form 7,8-diaminopelargonic acid (DAPA). It is the only aminotransferase known to utilize SAM as an amino donor. This chain is Adenosylmethionine-8-amino-7-oxononanoate aminotransferase, found in Buchnera aphidicola subsp. Baizongia pistaciae (strain Bp).